A 188-amino-acid polypeptide reads, in one-letter code: Pyridoxal 5'-phosphate synthase subunit PdxT (188 aa).

Residue 47–49 (GES) coordinates L-glutamine. The active-site Nucleophile is Cys-79. L-glutamine-binding positions include Arg-105 and 134 to 135 (IR). Residues His-170 and Glu-172 each act as charge relay system in the active site.

This sequence belongs to the glutaminase PdxT/SNO family. In terms of assembly, in the presence of PdxS, forms a dodecamer of heterodimers. Only shows activity in the heterodimer.

The enzyme catalyses aldehydo-D-ribose 5-phosphate + D-glyceraldehyde 3-phosphate + L-glutamine = pyridoxal 5'-phosphate + L-glutamate + phosphate + 3 H2O + H(+). It catalyses the reaction L-glutamine + H2O = L-glutamate + NH4(+). It functions in the pathway cofactor biosynthesis; pyridoxal 5'-phosphate biosynthesis. Functionally, catalyzes the hydrolysis of glutamine to glutamate and ammonia as part of the biosynthesis of pyridoxal 5'-phosphate. The resulting ammonia molecule is channeled to the active site of PdxS. The sequence is that of Pyridoxal 5'-phosphate synthase subunit PdxT from Listeria monocytogenes serovar 1/2a (strain ATCC BAA-679 / EGD-e).